The chain runs to 577 residues: Arginine--tRNA ligase (577 aa).

The 'HIGH' region motif lies at 122–132; the sequence is PNVAKEMHVGH.

This sequence belongs to the class-I aminoacyl-tRNA synthetase family. In terms of assembly, monomer.

It localises to the cytoplasm. The catalysed reaction is tRNA(Arg) + L-arginine + ATP = L-arginyl-tRNA(Arg) + AMP + diphosphate. The protein is Arginine--tRNA ligase of Klebsiella pneumoniae subsp. pneumoniae (strain ATCC 700721 / MGH 78578).